We begin with the raw amino-acid sequence, 177 residues long: Large ribosomal subunit protein uL6 (177 aa).

As to quaternary structure, part of the 50S ribosomal subunit.

Its function is as follows. This protein binds to the 23S rRNA, and is important in its secondary structure. It is located near the subunit interface in the base of the L7/L12 stalk, and near the tRNA binding site of the peptidyltransferase center. This is Large ribosomal subunit protein uL6 from Rhodopseudomonas palustris (strain ATCC BAA-98 / CGA009).